Here is a 713-residue protein sequence, read N- to C-terminus: Forkhead box protein P2 (713 aa).

Residues 1-28 are compositionally biased toward polar residues; the sequence is MMQESATETISNSSMNQNGMSTLSSQLD. 2 disordered regions span residues 1–45 and 279–337; these read MMQE…SEVS and DNGI…TGAS. A compositionally biased stretch (low complexity) spans 290 to 303; sequence TTNNSSSTTSSTTS. Over residues 313–322 the composition is skewed to polar residues; that stretch reads SIVNGQSSVL. Over residues 324–335 the composition is skewed to basic and acidic residues; sequence ARRDSSSHEETG. Residues 344-369 form a C2H2-type zinc finger; sequence GVCKWPGCESICEDFGQFLKHLNNEH. Residues 386–407 are leucine-zipper; sequence VQQLEIQLSKERERLQAMMTHL. Residues 420-424 form a CTBP1-binding region; the sequence is PLNLV. A compositionally biased stretch (low complexity) spans 436-457; sequence TSPQSLPQTPTTPTAPVTPITQ. The tract at residues 436–463 is disordered; sequence TSPQSLPQTPTTPTAPVTPITQGPSVIT. A DNA-binding region (fork-head) is located at residues 502–592; the sequence is RPPFTYATLI…SQKITGSPTL (91 aa). Disordered regions lie at residues 647 to 666 and 676 to 713; these read LDHIDSNGNSSPGCSPQPHI and VIAEDEDCPMSLVTTANHSPELEDDREIEEEPLSEDLE. A compositionally biased stretch (acidic residues) spans 697 to 713; the sequence is LEDDREIEEEPLSEDLE.

Forms homodimers and heterodimers with FOXP1 and FOXP4. Dimerization is required for DNA-binding. Interacts with CTBP1. Interacts with FOXP1. Interacts with TBR1. Interacts with ZMYM2.

The protein resides in the nucleus. In terms of biological role, transcriptional repressor that may play a role in the specification and differentiation of lung epithelium. May also play a role in developing neural, gastrointestinal and cardiovascular tissues. Can act with CTBP1 to synergistically repress transcription but CTPBP1 is not essential. Plays a role in synapse formation by regulating SRPX2 levels. This chain is Forkhead box protein P2 (FOXP2), found in Hylobates lar (Lar gibbon).